A 542-amino-acid polypeptide reads, in one-letter code: Glutamyl-tRNA reductase 2, chloroplastic (542 aa).

Substrate is bound by residues 142 to 145, Ser202, 207 to 209, and Gln213; these read TCNR and EGQ. The active-site Nucleophile is the Cys143. Position 284–289 (284–289) interacts with NADP(+); the sequence is GAGKMG.

The protein belongs to the glutamyl-tRNA reductase family. As to expression, found in all tissues examined.

It is found in the plastid. It localises to the chloroplast. The enzyme catalyses (S)-4-amino-5-oxopentanoate + tRNA(Glu) + NADP(+) = L-glutamyl-tRNA(Glu) + NADPH + H(+). It participates in porphyrin-containing compound metabolism; protoporphyrin-IX biosynthesis; 5-aminolevulinate from L-glutamyl-tRNA(Glu): step 1/2. Functionally, catalyzes the NADPH-dependent reduction of glutamyl-tRNA(Glu) to glutamate 1-semialdehyde (GSA). This Cucumis sativus (Cucumber) protein is Glutamyl-tRNA reductase 2, chloroplastic (HEMA2).